The following is a 193-amino-acid chain: MPSTVAPVKGPDHFLNLVFPERVFASYMSPLAQKHPKAALYIASLAGFIFGLLKLITFPVLCAAGLFVFPIKGIISSLCHRRLDACSGYMLATFLSLFSLALIIVGIVSCVAWAPEFIFPIISIGMALATTETCFQIYTHLFPALEHKPSSPLKIENTTTKLSRSSSAPDLSCPSLSTQPTSPNQSLSAYKKY.

Helical transmembrane passes span 40–56 (LYIASLAGFIFGLLKLI), 63–79 (AAGLFVFPIKGIISSLC), 86–110 (CSGYMLATFLSLFSLALIIVGIVSC), and 117–138 (FIFPIISIGMALATTETCFQIY). Residues 158–193 (TTTKLSRSSSAPDLSCPSLSTQPTSPNQSLSAYKKY) are disordered.

This sequence belongs to the chlamydial CPn_0442/CT_006/TC_0274 family.

It is found in the cell membrane. This is an uncharacterized protein from Chlamydia muridarum (strain MoPn / Nigg).